The sequence spans 231 residues: NADH-ubiquinone oxidoreductase chain 4 (231 aa).

The next 6 helical transmembrane spans lie at 1 to 21 (PIAG…YGII), 34 to 54 (MFLP…LTCL), 63 to 85 (IAYS…TPWG), 89 to 111 (AMAL…NTTY), 128 to 148 (ILPM…ATPP), and 156 to 176 (LLIM…LGLS).

It belongs to the complex I subunit 4 family.

It localises to the mitochondrion membrane. The enzyme catalyses a ubiquinone + NADH + 5 H(+)(in) = a ubiquinol + NAD(+) + 4 H(+)(out). Functionally, core subunit of the mitochondrial membrane respiratory chain NADH dehydrogenase (Complex I) that is believed to belong to the minimal assembly required for catalysis. Complex I functions in the transfer of electrons from NADH to the respiratory chain. The immediate electron acceptor for the enzyme is believed to be ubiquinone. The protein is NADH-ubiquinone oxidoreductase chain 4 (MT-ND4) of Trimeresurus stejnegeri (Chinese green tree viper).